The following is a 359-amino-acid chain: Fructose-bisphosphate aldolase class 2 (359 aa).

Ser50 contributes to the D-glyceraldehyde 3-phosphate binding site. The Proton donor role is filled by Asp83. Residues His84, Asp105, Glu142, and His198 each contribute to the Zn(2+) site. Gly199 lines the dihydroxyacetone phosphate pocket. His232 is a Zn(2+) binding site. Residues 233–235 (GSS) and 275–278 (NIDT) contribute to the dihydroxyacetone phosphate site.

This sequence belongs to the class II fructose-bisphosphate aldolase family. It depends on Zn(2+) as a cofactor.

The catalysed reaction is beta-D-fructose 1,6-bisphosphate = D-glyceraldehyde 3-phosphate + dihydroxyacetone phosphate. It functions in the pathway carbohydrate degradation; glycolysis; D-glyceraldehyde 3-phosphate and glycerone phosphate from D-glucose: step 4/4. In terms of biological role, catalyzes the aldol condensation of dihydroxyacetone phosphate (DHAP or glycerone-phosphate) with glyceraldehyde 3-phosphate (G3P) to form fructose 1,6-bisphosphate (FBP) in gluconeogenesis and the reverse reaction in glycolysis. The chain is Fructose-bisphosphate aldolase class 2 (fbaA) from Synechocystis sp. (strain ATCC 27184 / PCC 6803 / Kazusa).